Reading from the N-terminus, the 178-residue chain is Large ribosomal subunit protein uL6 (178 aa).

The protein belongs to the universal ribosomal protein uL6 family. As to quaternary structure, part of the 50S ribosomal subunit.

This protein binds to the 23S rRNA, and is important in its secondary structure. It is located near the subunit interface in the base of the L7/L12 stalk, and near the tRNA binding site of the peptidyltransferase center. This Campylobacter jejuni subsp. doylei (strain ATCC BAA-1458 / RM4099 / 269.97) protein is Large ribosomal subunit protein uL6.